The following is a 394-amino-acid chain: Probable aspartate/prephenate aminotransferase (394 aa).

Positions 40, 126, and 176 each coordinate L-aspartate. N6-(pyridoxal phosphate)lysine is present on lysine 239. An L-aspartate-binding site is contributed by arginine 370.

It belongs to the class-I pyridoxal-phosphate-dependent aminotransferase family. In terms of assembly, homodimer. The cofactor is pyridoxal 5'-phosphate.

Its subcellular location is the cytoplasm. It carries out the reaction L-aspartate + 2-oxoglutarate = oxaloacetate + L-glutamate. The catalysed reaction is L-arogenate + oxaloacetate = prephenate + L-aspartate. Functionally, catalyzes the reversible conversion of aspartate and 2-oxoglutarate to glutamate and oxaloacetate. Can also transaminate prephenate in the presence of aspartate. In Aquifex aeolicus (strain VF5), this protein is Probable aspartate/prephenate aminotransferase (aspC).